Reading from the N-terminus, the 203-residue chain is Guanylate kinase (203 aa).

One can recognise a Guanylate kinase-like domain in the interval 4–183 (GKLFVISAPS…ASTLLKSIIW (180 aa)). 11 to 18 (APSGAGKT) is a binding site for ATP.

This sequence belongs to the guanylate kinase family.

Its subcellular location is the cytoplasm. It catalyses the reaction GMP + ATP = GDP + ADP. Its function is as follows. Essential for recycling GMP and indirectly, cGMP. This Desulfotalea psychrophila (strain LSv54 / DSM 12343) protein is Guanylate kinase.